Here is a 959-residue protein sequence, read N- to C-terminus: Translation initiation factor IF-2 (959 aa).

A compositionally biased stretch (basic and acidic residues) spans 1 to 10; it reads MSDKTNDDKT. Residues 1 to 374 are disordered; the sequence is MSDKTNDDKT…SQMQETREKI (374 aa). Residues 27–37 are compositionally biased toward polar residues; it reads EQSTVRQNFSH. Composition is skewed to low complexity over residues 63 to 118 and 128 to 138; these read AAAA…VTKP and QRPGGQQAQRP. Composition is skewed to basic and acidic residues over residues 154–225 and 232–241; these read SEMD…EAAK and ARSERRDDAR. Residues 246–284 are compositionally biased toward low complexity; that stretch reads GARPQQAGRPQGGRPQPAGRPQQGSPRPAPIIADAAPIA. Over residues 318 to 333 the composition is skewed to basic and acidic residues; sequence PEVRAPKVVKGEDDRR. A tr-type G domain is found at 457–626; the sequence is SRPPVVTIMG…LLQAEMLDLK (170 aa). The segment at 466–473 is G1; it reads GHVDHGKT. Position 466-473 (466-473) interacts with GTP; sequence GHVDHGKT. Residues 491–495 are G2; sequence GITQH. The segment at 512–515 is G3; the sequence is DTPG. GTP-binding positions include 512 to 516 and 566 to 569; these read DTPGH and NKID. Residues 566 to 569 form a G4 region; the sequence is NKID. A G5 region spans residues 602 to 604; the sequence is SAK.

Belongs to the TRAFAC class translation factor GTPase superfamily. Classic translation factor GTPase family. IF-2 subfamily.

The protein resides in the cytoplasm. Functionally, one of the essential components for the initiation of protein synthesis. Protects formylmethionyl-tRNA from spontaneous hydrolysis and promotes its binding to the 30S ribosomal subunits. Also involved in the hydrolysis of GTP during the formation of the 70S ribosomal complex. This chain is Translation initiation factor IF-2, found in Brucella canis (strain ATCC 23365 / NCTC 10854 / RM-666).